The primary structure comprises 633 residues: Sodium- and chloride-dependent glycine transporter 1 (633 aa).

Over 1 to 30 (MGLCVNGAVPSEATKKDENLKRGNWGNQIE) the chain is Cytoplasmic. 3 helical membrane passes run 31–51 (FVLT…FPYL), 58–78 (GAFM…LFFM), and 113–133 (YIGI…FASM). The Extracellular segment spans residues 134 to 208 (NRVLPWTYCN…ISEDIGDFGE (75 aa)). Asn158, Asn164, Asn173, and Asn179 each carry an N-linked (GlcNAc...) asparagine glycan. A run of 9 helical transmembrane segments spans residues 209–229 (VQLP…LCLI), 238–258 (VVYF…IRGI), 283–303 (VWGD…GGLI), 330–350 (SVYA…HLGV), 373–393 (LLPI…LLGL), 429–449 (IIGF…WLLL), 453–473 (YAAS…VMYI), 493–513 (LFFQ…ILIF), and 533–553 (ITIG…YAIF). The Cytoplasmic segment spans residues 554–633 (KIWCSEGDTF…GQAHTQDSKV (80 aa)). The interval 588–633 (RYAQMSSTRSESNPEAQPLNPEKMKEDLSLTIQGSNGQAHTQDSKV) is disordered. Polar residues-rich tracts occupy residues 591–602 (QMSSTRSESNPE) and 617–633 (LTIQ…DSKV).

The protein belongs to the sodium:neurotransmitter symporter (SNF) (TC 2.A.22) family. SLC6A9 subfamily. First expressed in early tailbud stage embryos in the midbrain and anterior spinal cord, and weakly in the hindbrain. By late tailbud stages, expression extends posteriorly in the spinal cord to appear in between somites. Expressed in the forebrain, retina, between the somites and in the blood islands by the swimming tadpole stages.

The protein resides in the cell membrane. The enzyme catalyses glycine(out) + chloride(out) + 2 Na(+)(out) = glycine(in) + chloride(in) + 2 Na(+)(in). Its function is as follows. Sodium- and chloride-dependent glycine transporter which is essential for regulating glycine concentrations at inhibitory glycinergic synapses. The polypeptide is Sodium- and chloride-dependent glycine transporter 1 (Xenopus laevis (African clawed frog)).